The primary structure comprises 339 residues: N-acetylmuramate/N-acetylglucosamine kinase (339 aa).

Belongs to the kinase AmgK family.

It carries out the reaction N-acetyl-D-muramate + ATP = N-acetyl-alpha-D-muramate 1-phosphate + ADP + H(+). It catalyses the reaction N-acetyl-D-glucosamine + ATP = N-acetyl-alpha-D-glucosamine 1-phosphate + ADP + H(+). It functions in the pathway cell wall biogenesis; peptidoglycan recycling. Functionally, sugar kinase that catalyzes the ATP-dependent phosphorylation of N-acetylmuramate (MurNAc) and N-acetylglucosamine (GlcNAc) at its C1 hydroxyl group, leading to MurNAc alpha-1P and GlcNAc alpha-1P, respectively. Is involved in peptidoglycan recycling as part of a cell wall recycling pathway that bypasses de novo biosynthesis of the peptidoglycan precursor UDP-MurNAc. Plays a role in intrinsic resistance to fosfomycin, which targets the de novo synthesis of UDP-MurNAc. Is also able to use N-acetylgalactosamine (GalNAc) as a substrate, but not N-acetylmannosamine, N-deacetylated sugars or glucose. The sequence is that of N-acetylmuramate/N-acetylglucosamine kinase from Pseudomonas putida (strain ATCC 47054 / DSM 6125 / CFBP 8728 / NCIMB 11950 / KT2440).